A 2799-amino-acid chain; its full sequence is Peramine synthetase ppzA (2799 aa).

Residues 270–666 (QERCRLQPNA…VGRKDTQVKI (397 aa)) form an adenylation 1 region. Residues 799–875 (QPLTGMERLL…DLSRQSRYIE (77 aa)) form the Carrier 1 domain. Ser-836 is subject to O-(pantetheine 4'-phosphoryl)serine. The interval 914 to 1327 (DAYPCTPLQE…ITILTTEDLE (414 aa)) is condensation. Residues 1350–1743 (DKVQARPNAP…TLSFVRRKDT (394 aa)) form an adenylation 2 region. The segment at 1874–1970 (LEIGCGSGMM…EYLVKLIQDI (97 aa)) is methylation (Met) domain. Residues 2290–2368 (SPTTDMEKEL…RLLLDCCCDD (79 aa)) enclose the Carrier 2 domain. Ser-2327 is modified (O-(pantetheine 4'-phosphoryl)serine). Positions 2420-2737 (TVLLTGANGF…LADMLQDLED (318 aa)) are thiesterase (TE) domain.

It belongs to the NRP synthetase family. Pantetheine 4'-phosphate is required as a cofactor.

It catalyses the reaction (S)-1-pyrroline-5-carboxylate + L-arginine + S-adenosyl-L-methionine + 2 ATP = peramine + 2 AMP + S-adenosyl-L-homocysteine + 2 diphosphate + H2O + 2 H(+). It functions in the pathway secondary metabolite biosynthesis. In terms of biological role, nonribosomal peptide synthetase; part of the gene cluster that mediates the biosynthesis of pyrrolopyrazines, secondary metabolites showing insecticidal activity. The single multifunctional NRPS ppzA is responsible for the biosynthesis of peramine. The condensation domain of ppzA is proposed to catalyze formation of a peptide bond between 1-pyrroline-5-carboxylate and arginine. The methylation domain of ppzA would catalyze the N-methylation of the alpha-amino group of arginine. The reductase domain is proposed to be responsible for reduction of the thioester and the cyclization to form an iminium ion resulting in release from the peptide synthetase. Deprotonation of this intermediate and oxidation of the pyrroline ring would give rise to peramine. This final oxidation to give the pyrrole functionality may be spontaneous. In Epichloe species that produce only peramine, the peramine synthetase gene is not localized in a gene cluster, in contrast to Metarhizium species that contain additional pyrrolopyrazine biosynthesis genes. The 2-oxoglutarate-Fe(II) type oxidoreductase ppzC hydroxylates peramine to yield the newly identified compound 8-hydroxyperamine whereas ppzD converts L-proline into trans-4-hydroxy-L-proline, a precursor of peramine biosynthesis. The sequence is that of Peramine synthetase ppzA from Metarhizium majus (strain ARSEF 297).